The following is a 359-amino-acid chain: Peptide chain release factor 1 (359 aa).

Glutamine 235 bears the N5-methylglutamine mark. Residues 283–309 (QKAESERSQARRSQVGSGDRSERIRTY) are disordered.

Belongs to the prokaryotic/mitochondrial release factor family. In terms of processing, methylated by PrmC. Methylation increases the termination efficiency of RF1.

Its subcellular location is the cytoplasm. Functionally, peptide chain release factor 1 directs the termination of translation in response to the peptide chain termination codons UAG and UAA. The polypeptide is Peptide chain release factor 1 (Brucella abortus (strain S19)).